The sequence spans 263 residues: tRNA pseudouridine synthase A (263 aa).

Catalysis depends on Asp54, which acts as the Nucleophile. Tyr113 is a substrate binding site.

This sequence belongs to the tRNA pseudouridine synthase TruA family. In terms of assembly, homodimer.

The enzyme catalyses uridine(38/39/40) in tRNA = pseudouridine(38/39/40) in tRNA. Its function is as follows. Formation of pseudouridine at positions 38, 39 and 40 in the anticodon stem and loop of transfer RNAs. The polypeptide is tRNA pseudouridine synthase A (Lactobacillus helveticus (strain DPC 4571)).